The chain runs to 229 residues: Ribosome maturation factor RimM (229 aa).

The interval 1–39 (MAGHDSGSAKRGRSPSFGVFVRKPVERAPTKGAGDGAAD) is disordered. In terms of domain architecture, PRC barrel spans 148 to 229 (ADEFYWVDLI…RIVVDWEADY (82 aa)).

It belongs to the RimM family. In terms of assembly, binds ribosomal protein uS19.

It localises to the cytoplasm. In terms of biological role, an accessory protein needed during the final step in the assembly of 30S ribosomal subunit, possibly for assembly of the head region. Essential for efficient processing of 16S rRNA. May be needed both before and after RbfA during the maturation of 16S rRNA. It has affinity for free ribosomal 30S subunits but not for 70S ribosomes. The chain is Ribosome maturation factor RimM from Burkholderia thailandensis (strain ATCC 700388 / DSM 13276 / CCUG 48851 / CIP 106301 / E264).